Reading from the N-terminus, the 143-residue chain is Large ribosomal subunit protein uL11 (143 aa).

This sequence belongs to the universal ribosomal protein uL11 family. As to quaternary structure, part of the ribosomal stalk of the 50S ribosomal subunit. Interacts with L10 and the large rRNA to form the base of the stalk. L10 forms an elongated spine to which L12 dimers bind in a sequential fashion forming a multimeric L10(L12)X complex. In terms of processing, one or more lysine residues are methylated.

Its function is as follows. Forms part of the ribosomal stalk which helps the ribosome interact with GTP-bound translation factors. The protein is Large ribosomal subunit protein uL11 of Rhizobium etli (strain ATCC 51251 / DSM 11541 / JCM 21823 / NBRC 15573 / CFN 42).